We begin with the raw amino-acid sequence, 144 residues long: Cornifin-A (144 aa).

The interval 1-41 is disordered; that stretch reads MSSHQQKQPCTVPPQLHQQQVKQPCQPPPQEPCAPKTKDPC. The span at 13–24 shows a compositional bias: low complexity; it reads PPQLHQQQVKQP. 13 consecutive repeat copies span residues 27-34, 35-42, 43-49, 50-57, 58-65, 66-73, 74-81, 82-89, 90-97, 98-105, 106-113, 114-121, and 122-129. The segment at 27-129 is 13 X 8 AA approximate tandem repeats; it reads PPPQEPCAPK…CHPVVPEPCP (103 aa).

This sequence belongs to the cornifin (SPRR) family. Expressed in fetal periderm, hair follicles and in the thickened epidermis of the lip and footpad. Also present in the epithelia of various tissues such as the penis, vagina, forestomach, tongue and esophagus.

Its subcellular location is the cytoplasm. Its function is as follows. Cross-linked envelope protein of keratinocytes. It is a keratinocyte protein that first appears in the cell cytosol, but ultimately becomes cross-linked to membrane proteins by transglutaminase. All that results in the formation of an insoluble envelope beneath the plasma membrane. May participate widely in the construction of cell envelopes in cornifying epithelia characterized by either increased thickness or a requirement for extreme flexibility. In Mus musculus (Mouse), this protein is Cornifin-A (Sprr1a).